Here is a 2643-residue protein sequence, read N- to C-terminus: Ankyrin repeat domain-containing protein 11 (2643 aa).

2 disordered regions span residues 1-90 and 128-170; these read MPKG…KEPV and SANS…RGET. Composition is skewed to basic and acidic residues over residues 21-54 and 69-90; these read MVEKQTGKKDKDKVSLTKTPKLDRSDGGKEVRER and EQKDSDTEKQGPERKRIKKEPV. Positions 128 to 155 are enriched in polar residues; the sequence is SANSPVDTTPKHPSQSTVCQKGTPNSAS. The segment covering 156–170 has biased composition (basic and acidic residues); sequence KTKDKVNKRNERGET. 4 ANK repeats span residues 167–196, 200–229, 233–262, and 266–292; these read RGETRLHRAAIRGDARRIKELISEGADVNV, AGWTALHEACNRGYYDIAKQLLAAGAEVNT, DDDTPLHDAANNGHYKVVKLLLRYGGNPQQ, and KGETPLKVANSPTMVNLLLGKGTYTSS. S276 is subject to Phosphoserine. The tract at residues 289–365 is disordered; it reads YTSSEESSTE…DRVPPVDDKH (77 aa). Over residues 295–305 the composition is skewed to acidic residues; the sequence is SSTESSEEEDA. Positions 309–320 are enriched in polar residues; sequence APSSSVDGNNTD. 2 stretches are compositionally biased toward basic and acidic residues: residues 322–335 and 356–365; these read EFEKGLKLKAKNPE and DRVPPVDDKH. S408 bears the Phosphoserine mark. A Phosphothreonine modification is found at T410. At S411 the chain carries Phosphoserine. Disordered stretches follow at residues 423–504, 517–651, and 727–805; these read GEKL…CLKG, SLSA…GQCS, and DANK…DKEK. A compositionally biased stretch (basic and acidic residues) spans 438 to 451; sequence KARESSSSRQQKEK. Positions 452-462 are enriched in basic residues; the sequence is NKLKKKRKKET. A compositionally biased stretch (basic and acidic residues) spans 463–475; the sequence is KGKEVRFGKRSDK. The span at 484-494 shows a compositional bias: acidic residues; it reads ESSESEEDDGD. The segment covering 517–528 has biased composition (low complexity); the sequence is SLSASSTSSHGS. Basic and acidic residues predominate over residues 537–550; the sequence is GHTDQHTKHWRTDN. Residues 557-574 are compositionally biased toward polar residues; the sequence is PAWSEVSSLSDSSRTGLT. Positions 575–588 are enriched in low complexity; sequence SESDCSSEGSSVES. 2 stretches are compositionally biased toward basic residues: residues 591-602 and 633-646; these read PTRRKQEHRKRG and VKKHKTKHKHKHKE. S838 bears the Phosphoserine mark. Composition is skewed to basic and acidic residues over residues 918–931 and 938–962; these read KNSEKRRDQTEKHK and SEKDKKRRESAEGGRDRRDGRIRSE. Disordered regions lie at residues 918–962, 977–1037, and 1051–1074; these read KNSE…IRSE, SFKD…STLD, and EKKDGKEKHKDIHSKDRKASFDQL. S1070 bears the Phosphoserine mark. At T1111 the chain carries Phosphothreonine. A Phosphoserine modification is found at S1114. Disordered stretches follow at residues 1114 to 1388 and 1420 to 1711; these read SEDE…KDAS and LFSS…TPSC. Basic and acidic residues-rich tracts occupy residues 1133–1297, 1326–1343, 1355–1388, 1420–1444, 1464–1535, 1546–1564, 1577–1587, and 1595–1640; these read DTQR…DKIS, AEDKARDSACLSEKLREK, KSHERERAKKEKAEKKEKSEDYKDSISSVRKDAS, LFSSEKKDRSDPEREPAKRIEKELK, RERW…KGDS, VPSRDSGKKDSRPREKLLG, LSQKDLEIEER, and MKQM…KVKE. S1676 is modified (phosphoserine). Over residues 1678–1695 the composition is skewed to polar residues; the sequence is RTEQSRPTGVPTPTSVVS. Phosphoserine is present on residues S1777 and S1832. Y1835 and Y1836 each carry phosphotyrosine. Residues S1837 and S1844 each carry the phosphoserine modification. Disordered stretches follow at residues 1863 to 1900, 1981 to 2027, and 2111 to 2386; these read PPDSVFSNLPPKSSPSPRGELLSPAIEGTLPPDLGLPL, SPKH…EVKD, and HEAF…STQQ. Phosphoserine occurs at positions 1981 and 2139. Pro residues-rich tracts occupy residues 2150 to 2160 and 2175 to 2184; these read PVPPAESPPGP and EEPPAPPPQE. The span at 2273–2284 shows a compositional bias: low complexity; that stretch reads SAEASCVVAAAE. A compositionally biased stretch (basic and acidic residues) spans 2297–2315; the sequence is PEPKPTSEVPKAPKVEEVP. The segment at 2349–2643 is important for protein degradation; it reads AKGRASEEED…VNDDFVLLPA (295 aa). The span at 2371 to 2386 shows a compositional bias: low complexity; sequence RSSQQLQQQLNTSTQQ.

Interacts with the PAS region of the p160 coactivators. Subject to proteasomal degradation which is probably essential to regulate its activity.

The protein resides in the nucleus. Its function is as follows. Chromatin regulator which modulates histone acetylation and gene expression in neural precursor cells. May recruit histone deacetylases (HDACs) to the p160 coactivators/nuclear receptor complex to inhibit ligand-dependent transactivation. Has a role in proliferation and development of cortical neural precursors. May also regulate bone homeostasis. The chain is Ankyrin repeat domain-containing protein 11 from Mus musculus (Mouse).